The chain runs to 983 residues: Next to BRCA1 gene 1 protein (983 aa).

Residues 4–86 (QVTLNVTFKN…NQLQMQVHEG (83 aa)) enclose the PB1 domain. Phosphoserine is present on Ser117. The segment at 126–149 (MKTTEEPTAEARSPVPCDTDKPQD) is disordered. The ZZ-type zinc-finger motif lies at 214 to 266 (SWHIACSHCQKRIVGVRYQCSLCPSYNICEDCEAGPYSHDTNHILLKFRRPVV). Residues Cys219, Cys222, Cys233, Cys236, Cys242, Cys245, His252, and His256 each contribute to the Zn(2+) site. 2 ATG8 family proteins-binding regions span residues 544-638 (ASER…PASV) and 745-756 (ASSEDYIIILPE). Phosphothreonine is present on Thr588. Residues Ser592 and Ser598 each carry the phosphoserine modification. The disordered stretch occupies residues 611-645 (EESEGAGLKASPDSTVLTKRKAETPASVEETEEDL). Positions 768-813 (MYSSALSQPGLERGAEGEPGIESGQEPAEARERLPERESQPKEQSI) are disordered. Over residues 795 to 808 (AEARERLPERESQP) the composition is skewed to basic and acidic residues. Position 855 is a phosphoserine (Ser855). The interval 867–894 (DHVRGEPRGSTGLANSRQKSCDHSRHHN) is disordered. The region spanning 930 to 974 (SEDQTAALMAHLFEMGFCDRQLNLRLLRKHNHNILQVVTELLQVN) is the UBA domain.

Homooligomer and heterooligomer. Interacts with TRIM55. Interacts with titin/TTN. Interacts with RNF29, USP8, MAP1LC3A, MAP1LC3B, MAP1LC3C, GABARAP, GABARAPL1 and GABARAPL2. Binds to ubiquitin and ubiquitinated proteins. Interacts with SQSTM1. Interacts with TAX1BP1. Interacts with IRF3; this interaction mediates autophagic degradation of IRF3. Interacts with IL12A and IL12B. Post-translationally, phosphorylated by GSK3A; this phosphorylation inhibits NBR1 involvement in the formation of ubiquitinated protein aggregates.

The protein localises to the cytoplasm. It is found in the cytoplasmic vesicle. Its subcellular location is the autophagosome. It localises to the lysosome. The protein resides in the myofibril. The protein localises to the sarcomere. It is found in the m line. Ubiquitin-binding autophagy adapter that participates in different processes including host defense or intracellular homeostasis. Possesses a double function during the selective autophagy by acting as a shuttle bringing ubiquitinated proteins to autophagosomes and also by participating in the formation of protein aggregates. Plays a role in the regulation of the innate immune response by modulating type I interferon production and targeting ubiquitinated IRF3 for autophagic degradation. In response to oxidative stress, promotes an increase in SQSTM1 levels, phosphorylation, and body formation by preventing its autophagic degradation. In turn, activates the KEAP1-NRF2/NFE2L2 antioxidant pathway. Also plays non-autophagy role by mediating the shuttle of IL-12 to late endosome for subsequent secretion. The polypeptide is Next to BRCA1 gene 1 protein (Nbr1) (Rattus norvegicus (Rat)).